The sequence spans 347 residues: Bifunctional methylenetetrahydrofolate dehydrogenase/cyclohydrolase 2, mitochondrial (347 aa).

Substrate contacts are provided by residues 98–102 (YVRNK) and 145–147 (VQL). NAD(+)-binding positions include 214-216 (GRS) and arginine 247. 323–327 (PGGVG) lines the substrate pocket.

It belongs to the tetrahydrofolate dehydrogenase/cyclohydrolase family. The cofactor is Mg(2+).

The protein resides in the mitochondrion inner membrane. The catalysed reaction is (6R)-5,10-methylene-5,6,7,8-tetrahydrofolate + NAD(+) = (6R)-5,10-methenyltetrahydrofolate + NADH. It carries out the reaction (6R)-5,10-methenyltetrahydrofolate + H2O = (6R)-10-formyltetrahydrofolate + H(+). It catalyses the reaction (6R)-5,10-methylene-5,6,7,8-tetrahydrofolate + NADP(+) = (6R)-5,10-methenyltetrahydrofolate + NADPH. It functions in the pathway one-carbon metabolism; tetrahydrofolate interconversion. Functionally, bifunctional mitochondrial folate-interconverting enzyme that has both NAD/NADP-dependent methylenetetrahydrofolate dehydrogenase and methenyltetrahydrofolate cyclohydrolase activities. The polypeptide is Bifunctional methylenetetrahydrofolate dehydrogenase/cyclohydrolase 2, mitochondrial (Callithrix jacchus (White-tufted-ear marmoset)).